Reading from the N-terminus, the 37-residue chain is Large ribosomal subunit protein bL36 (37 aa).

It belongs to the bacterial ribosomal protein bL36 family.

The chain is Large ribosomal subunit protein bL36 from Bacillus pumilus (strain SAFR-032).